A 111-amino-acid chain; its full sequence is Large ribosomal subunit protein uL22 (111 aa).

This sequence belongs to the universal ribosomal protein uL22 family. Part of the 50S ribosomal subunit.

Its function is as follows. This protein binds specifically to 23S rRNA; its binding is stimulated by other ribosomal proteins, e.g. L4, L17, and L20. It is important during the early stages of 50S assembly. It makes multiple contacts with different domains of the 23S rRNA in the assembled 50S subunit and ribosome. Functionally, the globular domain of the protein is located near the polypeptide exit tunnel on the outside of the subunit, while an extended beta-hairpin is found that lines the wall of the exit tunnel in the center of the 70S ribosome. The protein is Large ribosomal subunit protein uL22 of Chlamydia trachomatis serovar L2b (strain UCH-1/proctitis).